A 512-amino-acid polypeptide reads, in one-letter code: Cytokinin hydroxylase (512 aa).

Residues 2–22 (MVTLVLKYVLVIVMTLILRVL) traverse the membrane as a helical segment. Cys-458 serves as a coordination point for heme.

Belongs to the cytochrome P450 family. The cofactor is heme. As to expression, specifically expressed in roots.

Its subcellular location is the membrane. It carries out the reaction N(6)-(dimethylallyl)adenosine 5'-phosphate + NADPH + O2 + H(+) = 9-ribosyl-trans-zeatin 5'-phosphate + NADP(+) + H2O. It catalyses the reaction N(6)-(dimethylallyl)adenosine 5'-diphosphate + NADPH + O2 + H(+) = 9-ribosyl-trans-zeatin 5'-diphosphate + NADP(+) + H2O. The catalysed reaction is N(6)-(dimethylallyl)adenosine 5'-triphosphate + NADPH + O2 + H(+) = 9-ribosyl-trans-zeatin 5'-triphosphate + NADP(+) + H2O. Its function is as follows. Cytokinin hydroxylase that catalyzes the biosynthesis of trans-zeatin via the isopentenyladenine riboside 5'-monophosphate (iPRMP)-dependent pathway. Can use isopentenyladenosine-5'-monophosphate, isopentenyladenosine-5'-diphosphate and isopentenyladenosine-5'-triphosphate as substrate. The polypeptide is Cytokinin hydroxylase (CYP735A2) (Arabidopsis thaliana (Mouse-ear cress)).